Reading from the N-terminus, the 681-residue chain is Sodium/glucose cotransporter 4 (681 aa).

The Extracellular segment spans residues 1–36 (MSKELAAMGPGASGDGVRTETAPHIALDSRVGLHAY). A helical membrane pass occupies residues 37–57 (DISVVVIYFVFVIAVGIWSSI). Over 58-75 (RASRGTIGGYFLAGRSMS) the chain is Cytoplasmic. A helical transmembrane segment spans residues 76-98 (WWPIGASLMSSNVGSGLFIGLAG). Over 99–114 (TGAAGGLAVGGFEWNA) the chain is Extracellular. The chain crosses the membrane as a helical span at residues 115-135 (TWLLLALGWVFVPVYIAAGVV). Residues 136-157 (TMPQYLKKRFGGQRIQVYMSVL) lie on the Cytoplasmic side of the membrane. Residues 158-178 (SLILYIFTKISTDIFSGALFI) traverse the membrane as a helical segment. The Extracellular segment spans residues 179–190 (QMALGWNLYLST). The helical transmembrane segment at 191–211 (GILLVVTAVYTIAGGLMAVIY) threads the bilayer. The Cytoplasmic portion of the chain corresponds to 212–217 (TDALQT). A helical transmembrane segment spans residues 218–238 (VIMVGGALVLMFLGFQDVGWY). The Extracellular segment spans residues 239-275 (PGLEQRYRQAIPNVTVPNTTCHLPRPDAFHILRDPVS). A glycan (N-linked (GlcNAc...) asparagine) is linked at Asn251. The chain crosses the membrane as a helical span at residues 276-296 (GDIPWPGLIFGLTVLATWCWC). Residues 297–317 (TDQVIVQRSLSAKSLSHAKGG) are Cytoplasmic-facing. The chain crosses the membrane as a helical span at residues 318–338 (SVLGGYLKILPMFFIVMPGMI). Residues 339-383 (SRALFPDEVGCVDPDVCQRICGARVGCSNIAYPKLVMALMPVGLR) lie on the Extracellular side of the membrane. Residues 384-406 (GLMIAVIMAALMSSLTSIFNSSS) form a helical membrane-spanning segment. The Cytoplasmic segment spans residues 407–427 (TLFTIDVWQRFRRKSTEQELM). The chain crosses the membrane as a helical span at residues 428-448 (VVGRVFVVFLVVISILWIPII). The Extracellular portion of the chain corresponds to 449-459 (QSSNSGQLFDY). A helical membrane pass occupies residues 460 to 480 (IQAVTSYLAPPITALFLLAIF). Topologically, residues 481-487 (CKRVTEP) are cytoplasmic. Residues 488–508 (GAFWGLVFGLGVGLLRMILEF) traverse the membrane as a helical segment. The Extracellular segment spans residues 509–530 (SYPAPACGEVDRRPAVLKDFHY). A helical membrane pass occupies residues 531–551 (LYFAILLCGLTAIVIVIVSLC). At 552–660 (TTPIPEEQLT…SIEEEPLWRH (109 aa)) the chain is on the cytoplasmic side. Basic and acidic residues predominate over residues 579–591 (AHESTPEISERPA). A disordered region spans residues 579–614 (AHESTPEISERPAGECPAGGGAAENSSLGQEQPEAP). Ser604 and Ser605 each carry phosphoserine. Residues 661–681 (VCNINAVLLLAINIFLWGYFA) traverse the membrane as a helical segment.

This sequence belongs to the sodium:solute symporter (SSF) (TC 2.A.21) family. As to expression, expressed in the small intestine, kidney and liver.

The protein localises to the cell membrane. It catalyses the reaction D-mannose(out) + n Na(+)(out) = D-mannose(in) + n Na(+)(in). Electrogenic Na(+)-coupled sugar symporter that may play a primary role in D-mannose and possibly D-fructose and D-glucose transport at the plasma membrane. Transporter activity is driven by a transmembrane Na(+) electrochemical gradient set by the Na(+)/K(+) pump. Exclusively recognizes sugar substrates having a pyranose ring with an axial hydroxyl group on carbon 2. The protein is Sodium/glucose cotransporter 4 of Homo sapiens (Human).